We begin with the raw amino-acid sequence, 315 residues long: Ester hydrolase C11orf54 (315 aa).

Zn(2+) contacts are provided by H266, H268, and H278.

Monomer. Requires Zn(2+) as cofactor.

It localises to the nucleus. Its subcellular location is the cytoplasm. In terms of biological role, exhibits ester hydrolase activity on the substrate p-nitrophenyl acetate, in vitro. Regulates DNA damage and repair by regulating HIF1A degradation via chaperone-mediated autophagy (CMA). Its function is as follows. Probably non-functional. This chain is Ester hydrolase C11orf54 (C11orf54), found in Homo sapiens (Human).